Consider the following 632-residue polypeptide: Probable potassium transport system protein Kup (632 aa).

The next 12 helical transmembrane spans lie at 19-39 (LLCL…PLYV), 57-77 (VIGI…LKYV), 111-131 (ILFL…VITP), 147-167 (PLLQ…LFML), 175-195 (IGAL…LVGL), 213-233 (AFAF…AVVL), 257-277 (WYGG…ALLL), 286-306 (PFFL…ATAA), 347-367 (IYIP…VLGF), 376-396 (AYGV…FFVL), 404-424 (FLLG…FFSA), and 429-449 (VAQG…IMIT).

Belongs to the HAK/KUP transporter (TC 2.A.72) family.

It localises to the cell inner membrane. It carries out the reaction K(+)(in) + H(+)(in) = K(+)(out) + H(+)(out). Transport of potassium into the cell. Likely operates as a K(+):H(+) symporter. This chain is Probable potassium transport system protein Kup, found in Nitrosospira multiformis (strain ATCC 25196 / NCIMB 11849 / C 71).